The primary structure comprises 495 residues: Probable cytosol aminopeptidase (495 aa).

Residues Lys-267 and Asp-272 each coordinate Mn(2+). The active site involves Lys-279. The Mn(2+) site is built by Asp-290, Asp-349, and Glu-351. Arg-353 is a catalytic residue.

Belongs to the peptidase M17 family. The cofactor is Mn(2+).

The protein resides in the cytoplasm. It catalyses the reaction Release of an N-terminal amino acid, Xaa-|-Yaa-, in which Xaa is preferably Leu, but may be other amino acids including Pro although not Arg or Lys, and Yaa may be Pro. Amino acid amides and methyl esters are also readily hydrolyzed, but rates on arylamides are exceedingly low.. The catalysed reaction is Release of an N-terminal amino acid, preferentially leucine, but not glutamic or aspartic acids.. Presumably involved in the processing and regular turnover of intracellular proteins. Catalyzes the removal of unsubstituted N-terminal amino acids from various peptides. The sequence is that of Probable cytosol aminopeptidase from Histophilus somni (strain 129Pt) (Haemophilus somnus).